A 304-amino-acid polypeptide reads, in one-letter code: Oxygen-dependent coproporphyrinogen-III oxidase (304 aa).

Ser-94 serves as a coordination point for substrate. A divalent metal cation is bound by residues His-98 and His-108. His-108 acts as the Proton donor in catalysis. Residue 110–112 (NVR) participates in substrate binding. A divalent metal cation is bound by residues His-147 and His-177. The important for dimerization stretch occupies residues 242 to 277 (YVEFNLVYDRGTLFGLQSGGRTESILMSLPPVAHWR). Residue 260–262 (GGR) participates in substrate binding.

It belongs to the aerobic coproporphyrinogen-III oxidase family. As to quaternary structure, homodimer. It depends on a divalent metal cation as a cofactor.

It is found in the cytoplasm. The enzyme catalyses coproporphyrinogen III + O2 + 2 H(+) = protoporphyrinogen IX + 2 CO2 + 2 H2O. It participates in porphyrin-containing compound metabolism; protoporphyrin-IX biosynthesis; protoporphyrinogen-IX from coproporphyrinogen-III (O2 route): step 1/1. Functionally, involved in the heme biosynthesis. Catalyzes the aerobic oxidative decarboxylation of propionate groups of rings A and B of coproporphyrinogen-III to yield the vinyl groups in protoporphyrinogen-IX. The polypeptide is Oxygen-dependent coproporphyrinogen-III oxidase (Methylococcus capsulatus (strain ATCC 33009 / NCIMB 11132 / Bath)).